Consider the following 385-residue polypeptide: Succinate--CoA ligase [ADP-forming] subunit beta (385 aa).

One can recognise an ATP-grasp domain in the interval 9-241 (KELLRDFGIN…IDEEEPSELE (233 aa)). ATP contacts are provided by residues Lys-46, 53–55 (GRG), Glu-99, Thr-102, and Glu-107. 2 residues coordinate Mg(2+): Asn-196 and Asp-210. Substrate is bound by residues Asn-261 and 318-320 (GIV).

It belongs to the succinate/malate CoA ligase beta subunit family. As to quaternary structure, heterotetramer of two alpha and two beta subunits. Mg(2+) serves as cofactor.

It carries out the reaction succinate + ATP + CoA = succinyl-CoA + ADP + phosphate. The catalysed reaction is GTP + succinate + CoA = succinyl-CoA + GDP + phosphate. Its pathway is carbohydrate metabolism; tricarboxylic acid cycle; succinate from succinyl-CoA (ligase route): step 1/1. Functionally, succinyl-CoA synthetase functions in the citric acid cycle (TCA), coupling the hydrolysis of succinyl-CoA to the synthesis of either ATP or GTP and thus represents the only step of substrate-level phosphorylation in the TCA. The beta subunit provides nucleotide specificity of the enzyme and binds the substrate succinate, while the binding sites for coenzyme A and phosphate are found in the alpha subunit. This chain is Succinate--CoA ligase [ADP-forming] subunit beta, found in Campylobacter fetus subsp. fetus (strain 82-40).